The primary structure comprises 741 residues: 1,4-alpha-glucan branching enzyme GlgB 2 (741 aa).

Residues 1 to 38 (MALRDTSIPEPSGPVPPAPGACATAPPLDPTDRGRLLA) form a disordered region. The active-site Nucleophile is D421. Residue E474 is the Proton donor of the active site.

Belongs to the glycosyl hydrolase 13 family. GlgB subfamily. As to quaternary structure, monomer.

The enzyme catalyses Transfers a segment of a (1-&gt;4)-alpha-D-glucan chain to a primary hydroxy group in a similar glucan chain.. It functions in the pathway glycan biosynthesis; glycogen biosynthesis. In terms of biological role, catalyzes the formation of the alpha-1,6-glucosidic linkages in glycogen by scission of a 1,4-alpha-linked oligosaccharide from growing alpha-1,4-glucan chains and the subsequent attachment of the oligosaccharide to the alpha-1,6 position. This is 1,4-alpha-glucan branching enzyme GlgB 2 (glgB2) from Streptomyces coelicolor (strain ATCC BAA-471 / A3(2) / M145).